The following is a 265-amino-acid chain: 4-diphosphocytidyl-2-C-methyl-D-erythritol kinase (265 aa).

K8 is an active-site residue. 95–105 contacts ATP; it reads PIGAGLGGGSS. Residue D135 is part of the active site.

The protein belongs to the GHMP kinase family. IspE subfamily.

The enzyme catalyses 4-CDP-2-C-methyl-D-erythritol + ATP = 4-CDP-2-C-methyl-D-erythritol 2-phosphate + ADP + H(+). The protein operates within isoprenoid biosynthesis; isopentenyl diphosphate biosynthesis via DXP pathway; isopentenyl diphosphate from 1-deoxy-D-xylulose 5-phosphate: step 3/6. Functionally, catalyzes the phosphorylation of the position 2 hydroxy group of 4-diphosphocytidyl-2C-methyl-D-erythritol. This chain is 4-diphosphocytidyl-2-C-methyl-D-erythritol kinase, found in Ureaplasma urealyticum serovar 10 (strain ATCC 33699 / Western).